The primary structure comprises 414 residues: Protein HIM1 (414 aa).

In terms of biological role, may participate in the control of processing of mutational intermediates appearing during error-prone bypass of DNA damage. The sequence is that of Protein HIM1 (HIM1) from Saccharomyces cerevisiae (strain ATCC 204508 / S288c) (Baker's yeast).